Reading from the N-terminus, the 101-residue chain is Large ribosomal subunit protein uL24 (101 aa).

Belongs to the universal ribosomal protein uL24 family. Part of the 50S ribosomal subunit.

Functionally, one of two assembly initiator proteins, it binds directly to the 5'-end of the 23S rRNA, where it nucleates assembly of the 50S subunit. In terms of biological role, one of the proteins that surrounds the polypeptide exit tunnel on the outside of the subunit. The polypeptide is Large ribosomal subunit protein uL24 (Dinoroseobacter shibae (strain DSM 16493 / NCIMB 14021 / DFL 12)).